The primary structure comprises 1024 residues: Beta-galactosidase (1024 aa).

Substrate is bound by residues Asn-103 and Asp-202. Residue Asp-202 coordinates Na(+). Mg(2+)-binding residues include Glu-417, His-419, and Glu-462. Substrate-binding positions include Glu-462 and 538 to 541; that span reads EYAH. Glu-462 acts as the Proton donor in catalysis. Glu-538 (nucleophile) is an active-site residue. Asn-598 lines the Mg(2+) pocket. The Na(+) site is built by Phe-602 and Asn-605. Residues Asn-605 and Trp-1000 each contribute to the substrate site.

Belongs to the glycosyl hydrolase 2 family. As to quaternary structure, homotetramer. Mg(2+) is required as a cofactor. Na(+) serves as cofactor.

It catalyses the reaction Hydrolysis of terminal non-reducing beta-D-galactose residues in beta-D-galactosides.. The polypeptide is Beta-galactosidase (Klebsiella pneumoniae).